Consider the following 251-residue polypeptide: Maleate isomerase (251 aa).

Residues N14, 76–78 (CLV), Y133, and N163 contribute to the substrate site. C76 acts as the Nucleophile in catalysis. At C76 the chain carries S-(2-succinyl)cysteine. The active-site Proton donor is C194. Substrate is bound at residue 195-196 (VQ).

The protein belongs to the maleate isomerase family. In terms of assembly, homodimer.

The catalysed reaction is maleate = fumarate. Its function is as follows. Catalyzes cis-trans isomerization of the C2-C3 double bond in maleate to yield fumarate. Shows a strict specificity for maleate, with no activity detected toward structurally related substrates including citraconate, mesaconate, dimethylmaleate, and maleamide. In Nocardia farcinica (strain IFM 10152), this protein is Maleate isomerase.